Consider the following 408-residue polypeptide: MESRVLSSGATTISGIPRLTRPAGRTTTTTVVAVASPAKLNTNGGNLVWGRQLRPSLLNLDHSSPVSLVTKPVKRDVLKPCTATASDSAGDAAPVGFFAKYPFLVTGFFFFMWYFLNVIFNILNKKIYNYFPYPYFVSAIHLAVGVVYCLGGWAVGLPKRAPMDSNLLKLLIPVAFCHALGHVTSNVSFAAVAVSFTHTIKSLEPFFNAAASQFILGQSIPITLWLSLAPVVIGVSMASLTELSFNWLGFISAMISNISFTYRSIYSKKAMTDMDSTNLYAYISIISLLFCIPPAIILEGPQLLKHGFSDAIAKVGMTKFISDLFWVGMFYHLYNQLAINTLERVAPLTHAVGNVLKRVFVIGFSIIVFGNKISTQTAIGTSIAIAGVAVYSLIKAKIEEEKRGLKSA.

A chloroplast-targeting transit peptide spans 1 to 82 (MESRVLSSGA…VKRDVLKPCT (82 aa)). The Chloroplast intermembrane portion of the chain corresponds to 83 to 102 (ATASDSAGDAAPVGFFAKYP). A helical transmembrane segment spans residues 103-123 (FLVTGFFFFMWYFLNVIFNIL). The Lumenal portion of the chain corresponds to 124-135 (NKKIYNYFPYPY). The helical transmembrane segment at 136–156 (FVSAIHLAVGVVYCLGGWAVG) threads the bilayer. At 157-213 (LPKRAPMDSNLLKLLIPVAFCHALGHVTSNVSFAAVAVSFTHTIKSLEPFFNAAASQ) the chain is on the chloroplast intermembrane side. Residues 214 to 234 (FILGQSIPITLWLSLAPVVIG) form a helical membrane-spanning segment. The Lumenal segment spans residues 235-278 (VSMASLTELSFNWLGFISAMISNISFTYRSIYSKKAMTDMDSTN). A helical transmembrane segment spans residues 279-298 (LYAYISIISLLFCIPPAIIL). Residues 299-376 (EGPQLLKHGF…IVFGNKISTQ (78 aa)) lie on the Chloroplast intermembrane side of the membrane. A helical membrane pass occupies residues 377 to 397 (TAIGTSIAIAGVAVYSLIKAK). Topologically, residues 398–408 (IEEEKRGLKSA) are lumenal.

The protein belongs to the TPT transporter family. TPT (TC 2.A.7.9) subfamily. Homodimer.

The protein localises to the plastid. It localises to the chloroplast membrane. Functionally, mediates the export of fixed carbons from the chloroplasts into the cytosol in the form of triose phosphates. This is Triose phosphate/phosphate translocator, chloroplastic (TPT) from Flaveria pringlei.